The following is a 145-amino-acid chain: Endoribonuclease YbeY (145 aa).

Zn(2+)-binding residues include H109, H113, and H119.

The protein belongs to the endoribonuclease YbeY family. It depends on Zn(2+) as a cofactor.

Its subcellular location is the cytoplasm. Functionally, single strand-specific metallo-endoribonuclease involved in late-stage 70S ribosome quality control and in maturation of the 3' terminus of the 16S rRNA. This Ruthia magnifica subsp. Calyptogena magnifica protein is Endoribonuclease YbeY.